Here is a 294-residue protein sequence, read N- to C-terminus: Deubiquitinase OTUD6B (294 aa).

Disordered regions lie at residues 1–46 and 67–120; these read MDEA…RKQL and AFAQ…ERDE. 2 stretches are compositionally biased toward polar residues: residues 27–36 and 73–86; these read KIQSMKNSVP and PEPT…NGVT. A compositionally biased stretch (basic and acidic residues) spans 111 to 120; sequence KAAQEKERDE. The OTU domain occupies 150–287; it reads LQIRQIPSDG…GEHYNSVELL (138 aa). The cys-loop stretch occupies residues 155-161; it reads IPSDGHC. The active site involves Asp158. Catalysis depends on Cys161, which acts as the Nucleophile. Positions 222-232 are variable-loop; that stretch reads IVNTPAWGGQL. The tract at residues 270 to 280 is his-loop; that stretch reads YMRHAYGLGEH. The active site involves His280.

It carries out the reaction Thiol-dependent hydrolysis of ester, thioester, amide, peptide and isopeptide bonds formed by the C-terminal Gly of ubiquitin (a 76-residue protein attached to proteins as an intracellular targeting signal).. In terms of biological role, deubiquitinating enzyme that may play a role in the ubiquitin-dependent regulation of different cellular processes. This is Deubiquitinase OTUD6B (otud6b) from Xenopus tropicalis (Western clawed frog).